Reading from the N-terminus, the 102-residue chain is Protein V2 (102 aa).

May be involved in the regulation of ssDNA versus dsDNA levels. This chain is Protein V2, found in Beet curly top virus (strain California/Logan) (BCTV).